A 94-amino-acid polypeptide reads, in one-letter code: Pyrimidine/purine nucleoside phosphorylase (94 aa).

This sequence belongs to the nucleoside phosphorylase PpnP family.

The enzyme catalyses a purine D-ribonucleoside + phosphate = a purine nucleobase + alpha-D-ribose 1-phosphate. It carries out the reaction adenosine + phosphate = alpha-D-ribose 1-phosphate + adenine. The catalysed reaction is cytidine + phosphate = cytosine + alpha-D-ribose 1-phosphate. It catalyses the reaction guanosine + phosphate = alpha-D-ribose 1-phosphate + guanine. The enzyme catalyses inosine + phosphate = alpha-D-ribose 1-phosphate + hypoxanthine. It carries out the reaction thymidine + phosphate = 2-deoxy-alpha-D-ribose 1-phosphate + thymine. The catalysed reaction is uridine + phosphate = alpha-D-ribose 1-phosphate + uracil. It catalyses the reaction xanthosine + phosphate = alpha-D-ribose 1-phosphate + xanthine. Functionally, catalyzes the phosphorolysis of diverse nucleosides, yielding D-ribose 1-phosphate and the respective free bases. Can use uridine, adenosine, guanosine, cytidine, thymidine, inosine and xanthosine as substrates. Also catalyzes the reverse reactions. The protein is Pyrimidine/purine nucleoside phosphorylase of Cronobacter sakazakii (strain ATCC BAA-894) (Enterobacter sakazakii).